A 276-amino-acid polypeptide reads, in one-letter code: Rhamnulose-1-phosphate aldolase (276 aa).

Glu117 is an active-site residue. The Zn(2+) site is built by His141, His143, and His212.

The protein belongs to the aldolase class II family. RhaD subfamily. Homotetramer. It depends on Zn(2+) as a cofactor.

The protein resides in the cytoplasm. The enzyme catalyses L-rhamnulose 1-phosphate = (S)-lactaldehyde + dihydroxyacetone phosphate. Its pathway is carbohydrate degradation; L-rhamnose degradation; glycerone phosphate from L-rhamnose: step 3/3. Its function is as follows. Catalyzes the reversible cleavage of L-rhamnulose-1-phosphate to dihydroxyacetone phosphate (DHAP) and L-lactaldehyde. This chain is Rhamnulose-1-phosphate aldolase, found in Enterobacter sp. (strain 638).